The following is a 549-amino-acid chain: Hydroxylamine reductase (549 aa).

Residues cysteine 5, cysteine 8, cysteine 17, and cysteine 23 each coordinate [4Fe-4S] cluster. Residues histidine 243, glutamate 267, cysteine 311, cysteine 403, cysteine 431, cysteine 456, glutamate 491, and lysine 493 each contribute to the hybrid [4Fe-2O-2S] cluster site. Cysteine 403 carries the cysteine persulfide modification.

Belongs to the HCP family. The cofactor is [4Fe-4S] cluster. Hybrid [4Fe-2O-2S] cluster serves as cofactor.

Its subcellular location is the cytoplasm. The enzyme catalyses A + NH4(+) + H2O = hydroxylamine + AH2 + H(+). Its function is as follows. Catalyzes the reduction of hydroxylamine to form NH(3) and H(2)O. The chain is Hydroxylamine reductase from Desulfitobacterium hafniense (strain DSM 10664 / DCB-2).